Consider the following 249-residue polypeptide: Sec-independent protein translocase protein TatC (249 aa).

Helical transmembrane passes span 18–38 (VSVG…KNIF), 69–89 (AIVI…APGL), 96–116 (VILP…AFSY), 151–171 (LILG…LAKV), 187–207 (IVVI…SQIF), and 208–228 (MALP…MVNP).

This sequence belongs to the TatC family. As to quaternary structure, the Tat system comprises two distinct complexes: a TatABC complex, containing multiple copies of TatA, TatB and TatC subunits, and a separate TatA complex, containing only TatA subunits. Substrates initially bind to the TatABC complex, which probably triggers association of the separate TatA complex to form the active translocon.

It is found in the cell inner membrane. Its function is as follows. Part of the twin-arginine translocation (Tat) system that transports large folded proteins containing a characteristic twin-arginine motif in their signal peptide across membranes. Together with TatB, TatC is part of a receptor directly interacting with Tat signal peptides. In Helicobacter pylori (strain J99 / ATCC 700824) (Campylobacter pylori J99), this protein is Sec-independent protein translocase protein TatC.